The sequence spans 448 residues: Putative carbonic anhydrase 2 (448 aa).

One can recognise an Alpha-carbonic anhydrase domain in the interval 1–222 (AYRQTENLLY…PAERDVFRII (222 aa)). H19 contributes to the Zn(2+) binding site. Residues N139 and N198 are each glycosylated (N-linked (GlcNAc...) asparagine). A disordered region spans residues 229–448 (RREEDDERGD…DKGDDKGDDN (220 aa)). Over residues 245–280 (DDDDNYDDDDYYNDDYSNDDYYDDDYYYDDYDDDTD) the composition is skewed to acidic residues. Basic and acidic residues-rich tracts occupy residues 281–334 (DDHK…DDSG) and 342–354 (RDGR…RDRN). N-linked (GlcNAc...) asparagine glycosylation is present at N314. The segment covering 357 to 368 (NGNGRENGGVRG) has biased composition (gly residues). The segment covering 370–379 (GNDRDGRRDN) has biased composition (basic and acidic residues). A glycan (N-linked (GlcNAc...) asparagine) is linked at N385. The segment covering 386-421 (GTRRGNGDDRGGRRNEDRGENRRGKDDQERESEDGR) has biased composition (basic and acidic residues). Residues 422–435 (RRRRRFNGRRRRRG) are compositionally biased toward basic residues. Residues 436–448 (RGDDKGDDKGDDN) are compositionally biased toward basic and acidic residues.

Belongs to the alpha-carbonic anhydrase family. In terms of tissue distribution, component of the acid-insoluble and acid-soluble organic matrix of calcified layers of the shell (at protein level).

Its subcellular location is the secreted. It catalyses the reaction hydrogencarbonate + H(+) = CO2 + H2O. Its function is as follows. Reversible hydration of carbon dioxide. This chain is Putative carbonic anhydrase 2, found in Lottia gigantea (Giant owl limpet).